We begin with the raw amino-acid sequence, 445 residues long: NSARADLCVALAKHTGMSPERMMVADVFSHRFYKIYQLEESLSSILDRDDIFIYEVSGRSAIGENSREDVVLPIYLRERTPARDYNNSYYGLMLFGHPLLVSVPRDRLSWDALYHILLYRLSRYVTRPSSDDEDDGDEKDIEDKDNIPKPGHVAGASSQDSGAGSGGAQLWSRRRKPAPVDNSPGPSHWPQRARRKHLFTLQTVNSNGTSDRSTFNEDTHAQPYIAIDWEPEMKKRYYDEVEAEGYVKHDCVGYVLKKAPVRLQECIELFTTVETLEKENPWFCPTCKQHQLATKKLDLWMLPETLIIHLKRFSYTKFSREKLDTLVEFPIRDLDFSEFVIKPQNESAPELYKYDLIAVSNHYGGLRDGHYTTFACNKDSGQSDYFDDNSVSPVTENQIESKAAYVLFYQRQDVARRLQPQPSSSDPPASPACGSPPNSEFMDVN.

The USP domain maps to 1–412; it reads NSARADLCVA…AAYVLFYQRQ (412 aa). A disordered region spans residues 127–194; it reads RPSSDDEDDG…GPSHWPQRAR (68 aa). A Phosphoserine modification is found at serine 130. A compositionally biased stretch (acidic residues) spans 131–140; that stretch reads DDEDDGDEKD. The active-site Nucleophile is histidine 362. Residue histidine 370 is the Proton acceptor of the active site. Residues 416–445 form a disordered region; it reads RRLQPQPSSSDPPASPACGSPPNSEFMDVN. Residues 420–439 show a composition bias toward low complexity; it reads PQPSSSDPPASPACGSPPNS. Serine 430 carries the post-translational modification Phosphoserine.

The protein belongs to the peptidase C19 family. Monomer. Interacts with RANBP9/RANBPM. Interacts with BRCA2. Interacts with CHUK/IKKA. Interacts with NFKBIA. Associated component of the Polycomb group (PcG) multiprotein PRC1-like complex.

It is found in the nucleus. The protein resides in the cytoplasm. The protein localises to the chromosome. It carries out the reaction Thiol-dependent hydrolysis of ester, thioester, amide, peptide and isopeptide bonds formed by the C-terminal Gly of ubiquitin (a 76-residue protein attached to proteins as an intracellular targeting signal).. In terms of biological role, protease that can remove conjugated ubiquitin from target proteins and polyubiquitin chains. Inhibits the degradation of target proteins by the proteasome. Cleaves preferentially 'Lys-6' and 'Lys-63'-linked ubiquitin chains. Has lower activity with 'Lys-11' and 'Lys-33'-linked ubiquitin chains, and extremely low activity with 'Lys-27', 'Lys-29' and 'Lys-48'-linked ubiquitin chains (in vitro). Plays a role in the regulation of pathways leading to NF-kappa-B activation. Plays a role in the regulation of DNA repair after double-stranded DNA breaks. Acts as a chromatin regulator via its association with the Polycomb group (PcG) multiprotein PRC1-like complex; may act by deubiquitinating components of the PRC1-like complex. Promotes cell proliferation by deubiquitinating phosphorylated E2F1. In Canis lupus familiaris (Dog), this protein is Ubiquitin carboxyl-terminal hydrolase 11 (USP11).